The chain runs to 172 residues: NAD(P)H-quinone oxidoreductase subunit I, chloroplastic (172 aa).

4Fe-4S ferredoxin-type domains are found at residues 55–84 (GRIHFEFDKCIACEVCVRVCPIDLPVVDWK) and 95–124 (LNYSIDFGICIFCGNCVEYCPTNCLSMTEE). Residues cysteine 64, cysteine 67, cysteine 70, cysteine 74, cysteine 104, cysteine 107, cysteine 110, and cysteine 114 each coordinate [4Fe-4S] cluster.

This sequence belongs to the complex I 23 kDa subunit family. NDH is composed of at least 16 different subunits, 5 of which are encoded in the nucleus. [4Fe-4S] cluster serves as cofactor.

It localises to the plastid. It is found in the chloroplast thylakoid membrane. The enzyme catalyses a plastoquinone + NADH + (n+1) H(+)(in) = a plastoquinol + NAD(+) + n H(+)(out). It carries out the reaction a plastoquinone + NADPH + (n+1) H(+)(in) = a plastoquinol + NADP(+) + n H(+)(out). Functionally, NDH shuttles electrons from NAD(P)H:plastoquinone, via FMN and iron-sulfur (Fe-S) centers, to quinones in the photosynthetic chain and possibly in a chloroplast respiratory chain. The immediate electron acceptor for the enzyme in this species is believed to be plastoquinone. Couples the redox reaction to proton translocation, and thus conserves the redox energy in a proton gradient. This is NAD(P)H-quinone oxidoreductase subunit I, chloroplastic from Capsella bursa-pastoris (Shepherd's purse).